Here is a 1140-residue protein sequence, read N- to C-terminus: DNA damage-binding protein 1 (1140 aa).

The protein belongs to the DDB1 family. In terms of assembly, component of the UV-DDB complex which includes DDB1 and DDB2; the heterodimer dimerizes to give rise to a heterotetramer when bound to damaged DNA. The UV-DDB complex interacts with monoubiquitinated histone H2A and binds to XPC via the DDB2 subunit. Component of numerous DCX (DDB1-CUL4-X-box) E3 ubiquitin-protein ligase complexes which consist of a core of DDB1, CUL4A or CUL4B and RBX1. DDB1 may recruit specific substrate targeting subunits to the DCX complex. These substrate targeting subunits are generally known as DCAF (DDB1- and CUL4-associated factor) or CDW (CUL4-DDB1-associated WD40-repeat) proteins. Interacts with Fbw5 and gig. May interact with ohgt.

It localises to the cytoplasm. The protein localises to the nucleus. It participates in protein modification; protein ubiquitination. Its function is as follows. Protein, which is both involved in DNA repair and protein ubiquitination, as part of the UV-DDB complex and DCX (DDB1-CUL4-X-box) complexes, respectively. Core component of the UV-DDB complex (UV-damaged DNA-binding protein complex), a complex that recognizes UV-induced DNA damage and recruit proteins of the nucleotide excision repair pathway (the NER pathway) to initiate DNA repair. The UV-DDB complex preferentially binds to cyclobutane pyrimidine dimers (CPD), 6-4 photoproducts (6-4 PP), apurinic sites and short mismatches. Also functions as a component of numerous distinct DCX (DDB1-CUL4-X-box) E3 ubiquitin-protein ligase complexes which mediate the ubiquitination and subsequent proteasomal degradation of target proteins. The functional specificity of the DCX E3 ubiquitin-protein ligase complex is determined by the variable substrate recognition component recruited by DDB1. Required for degradation of gig. Required for genomic stability in the face of endogenous DNA lesions and for the response to MMS-induced DNA damage. Required for normal wing development. This Drosophila melanogaster (Fruit fly) protein is DNA damage-binding protein 1 (pic).